Here is a 133-residue protein sequence, read N- to C-terminus: Large ribosomal subunit protein uL22c (133 aa).

Belongs to the universal ribosomal protein uL22 family. As to quaternary structure, part of the 50S ribosomal subunit.

It is found in the plastid. It localises to the chloroplast. Functionally, this protein binds specifically to 23S rRNA. Its function is as follows. The globular domain of the protein is located near the polypeptide exit tunnel on the outside of the subunit, while an extended beta-hairpin is found that lines the wall of the exit tunnel in the center of the 70S ribosome. In Manihot esculenta (Cassava), this protein is Large ribosomal subunit protein uL22c (rpl22).